Consider the following 185-residue polypeptide: Ribosome-recycling factor (185 aa).

The protein belongs to the RRF family.

It is found in the cytoplasm. Responsible for the release of ribosomes from messenger RNA at the termination of protein biosynthesis. May increase the efficiency of translation by recycling ribosomes from one round of translation to another. The protein is Ribosome-recycling factor of Streptococcus pneumoniae (strain P1031).